Consider the following 322-residue polypeptide: Ferric-anguibactin-binding protein FatB (322 aa).

Positions 1-22 (MFKSTLNIAVAIVCSSLVTLTG) are cleaved as a signal peptide. The N-palmitoyl cysteine moiety is linked to residue C23. Residue C23 is the site of S-diacylglycerol cysteine attachment. The Fe/B12 periplasmic-binding domain occupies 57-322 (RVAALDMNEV…IDDIIKGYQS (266 aa)).

Belongs to the bacterial solute-binding protein 8 family. Part of an iron transport system composed of the outer membrane receptor FatA, the periplasmic binding protein FatB and the inner membrane proteins FatC and FatD.

It is found in the cell inner membrane. Its function is as follows. Involved in the uptake of iron in complex with the siderophore anguibactin. Binds ferric-anguibactin in the periplasm and mediates its transport into the cytoplasm. The chain is Ferric-anguibactin-binding protein FatB from Vibrio anguillarum (strain ATCC 68554 / 775) (Listonella anguillarum).